A 100-amino-acid polypeptide reads, in one-letter code: Aspartyl/glutamyl-tRNA(Asn/Gln) amidotransferase subunit C (100 aa).

This sequence belongs to the GatC family. Heterotrimer of A, B and C subunits.

The enzyme catalyses L-glutamyl-tRNA(Gln) + L-glutamine + ATP + H2O = L-glutaminyl-tRNA(Gln) + L-glutamate + ADP + phosphate + H(+). The catalysed reaction is L-aspartyl-tRNA(Asn) + L-glutamine + ATP + H2O = L-asparaginyl-tRNA(Asn) + L-glutamate + ADP + phosphate + 2 H(+). Allows the formation of correctly charged Asn-tRNA(Asn) or Gln-tRNA(Gln) through the transamidation of misacylated Asp-tRNA(Asn) or Glu-tRNA(Gln) in organisms which lack either or both of asparaginyl-tRNA or glutaminyl-tRNA synthetases. The reaction takes place in the presence of glutamine and ATP through an activated phospho-Asp-tRNA(Asn) or phospho-Glu-tRNA(Gln). This Rickettsia canadensis (strain McKiel) protein is Aspartyl/glutamyl-tRNA(Asn/Gln) amidotransferase subunit C.